The chain runs to 59 residues: Small, acid-soluble spore protein H 1 (59 aa).

The protein belongs to the SspH family.

It is found in the spore core. This Bacillus cereus (strain ATCC 14579 / DSM 31 / CCUG 7414 / JCM 2152 / NBRC 15305 / NCIMB 9373 / NCTC 2599 / NRRL B-3711) protein is Small, acid-soluble spore protein H 1 (sspH1).